The chain runs to 317 residues: Transaldolase (317 aa).

The active-site Schiff-base intermediate with substrate is Lys126.

The protein belongs to the transaldolase family. Type 1 subfamily. As to quaternary structure, homodimer.

The protein localises to the cytoplasm. The enzyme catalyses D-sedoheptulose 7-phosphate + D-glyceraldehyde 3-phosphate = D-erythrose 4-phosphate + beta-D-fructose 6-phosphate. It functions in the pathway carbohydrate degradation; pentose phosphate pathway; D-glyceraldehyde 3-phosphate and beta-D-fructose 6-phosphate from D-ribose 5-phosphate and D-xylulose 5-phosphate (non-oxidative stage): step 2/3. Its function is as follows. Transaldolase is important for the balance of metabolites in the pentose-phosphate pathway. This Burkholderia lata (strain ATCC 17760 / DSM 23089 / LMG 22485 / NCIMB 9086 / R18194 / 383) protein is Transaldolase.